Consider the following 359-residue polypeptide: WW domain-binding protein wbp-11 (359 aa).

Disordered stretches follow at residues 1–38 (MPSI…DRQQ), 235–264 (PSSY…NPMG), and 317–341 (PGDN…QKQA). Residues 8-27 (KSGERYRAPTDQARKMDRKK) show a composition bias toward basic and acidic residues. A compositionally biased stretch (basic residues) spans 245–256 (MPHHHHHHHPHA).

Activates pre-mRNA splicing. May inhibit PP1 phosphatase activity. This chain is WW domain-binding protein wbp-11, found in Caenorhabditis elegans.